Consider the following 588-residue polypeptide: Protein POF1B (588 aa).

Coiled-coil stretches lie at residues 332-442 (STFS…VSET) and 502-530 (LHELTSLLEEKDSLIKRQSEELSKLRQEI).

As to quaternary structure, interacts with nonmuscle actin.

It is found in the cell junction. Its subcellular location is the tight junction. Plays a key role in the organization of epithelial monolayers by regulating the actin cytoskeleton. May be involved in ovary development. The sequence is that of Protein POF1B (POF1B) from Pongo abelii (Sumatran orangutan).